The chain runs to 504 residues: Glucosaminyl-phosphatidylinositol-acyltransferase PIGW (504 aa).

Over methionine 1–glutamate 21 the chain is Lumenal. An N-linked (GlcNAc...) asparagine glycan is attached at asparagine 15. The chain crosses the membrane as a helical span at residues isoleucine 22 to phenylalanine 42. The Cytoplasmic segment spans residues serine 43 to arginine 56. The chain crosses the membrane as a helical span at residues phenylalanine 57–tryptophan 75. Residues alanine 76–leucine 81 are Lumenal-facing. Residues glutamate 82–tyrosine 98 traverse the membrane as a helical segment. At arginine 99–cysteine 131 the chain is on the cytoplasmic side. A helical membrane pass occupies residues phenylalanine 132–phenylalanine 152. The Lumenal segment spans residues proline 153–tyrosine 162. Residues glycine 163 to leucine 183 traverse the membrane as a helical segment. Over glutamate 184–serine 202 the chain is Cytoplasmic. Residues leucine 203–isoleucine 223 form a helical membrane-spanning segment. Topologically, residues glycine 224–asparagine 237 are lumenal. The chain crosses the membrane as a helical span at residues phenylalanine 238–leucine 258. Residues asparagine 259–lysine 260 are Cytoplasmic-facing. The chain crosses the membrane as a helical span at residues serine 261 to leucine 281. The Lumenal portion of the chain corresponds to lysine 282 to glycine 305. The chain crosses the membrane as a helical span at residues isoleucine 306–methionine 326. Over histidine 327–lysine 338 the chain is Cytoplasmic. Residues valine 339–valine 359 traverse the membrane as a helical segment. At asparagine 360–asparagine 370 the chain is on the lumenal side. A helical membrane pass occupies residues leucine 371–glycine 391. At aspartate 392–glutamine 448 the chain is on the cytoplasmic side. Phosphoserine is present on serine 416. Residues leucine 449–leucine 469 traverse the membrane as a helical segment. The Lumenal segment spans residues histidine 470–threonine 473. The chain crosses the membrane as a helical span at residues leucine 474–leucine 494. At tyrosine 495 to tryptophan 504 the chain is on the cytoplasmic side.

This sequence belongs to the PIGW family.

It localises to the endoplasmic reticulum membrane. The protein operates within glycolipid biosynthesis; glycosylphosphatidylinositol-anchor biosynthesis. Its function is as follows. Acyltransferase that catalyzes the acyl transfer from an acyl-CoA at the 2-OH position of the inositol ring of glucosaminyl phosphatidylinositol (GlcN-PI) to generate glucosaminyl acyl phosphatidylinositol (GlcN-(acyl)PI) and participates in the fourth step of GPI-anchor biosynthesis. Required for the transport of GPI-anchored proteins to the plasma membrane. Acetylation during GPI-anchor biosynthesis is not essential for the subsequent mannosylation and is usually removed soon after the attachment of GPIs to proteins. The polypeptide is Glucosaminyl-phosphatidylinositol-acyltransferase PIGW (Homo sapiens (Human)).